A 711-amino-acid polypeptide reads, in one-letter code: Ribosomal RNA large subunit methyltransferase K/L (711 aa).

Residues 43–154 (TLYRTLLWSR…RENLVISLDL (112 aa)) enclose the THUMP domain.

It belongs to the methyltransferase superfamily. RlmKL family.

The protein localises to the cytoplasm. The enzyme catalyses guanosine(2445) in 23S rRNA + S-adenosyl-L-methionine = N(2)-methylguanosine(2445) in 23S rRNA + S-adenosyl-L-homocysteine + H(+). It carries out the reaction guanosine(2069) in 23S rRNA + S-adenosyl-L-methionine = N(2)-methylguanosine(2069) in 23S rRNA + S-adenosyl-L-homocysteine + H(+). Its function is as follows. Specifically methylates the guanine in position 2445 (m2G2445) and the guanine in position 2069 (m7G2069) of 23S rRNA. The chain is Ribosomal RNA large subunit methyltransferase K/L from Haemophilus influenzae (strain PittGG).